A 513-amino-acid polypeptide reads, in one-letter code: Carotenoid isomerooxygenase (513 aa).

4 residues coordinate Fe cation: His-184, His-242, His-312, and His-503.

This sequence belongs to the carotenoid oxygenase family. Fe(2+) is required as a cofactor.

It carries out the reaction all-trans-zeaxanthin + O2 = (3R)-11-cis-3-hydroxyretinal + (3R)-all-trans-3-hydroxyretinal. Its pathway is cofactor metabolism; retinol metabolism. Its function is as follows. Catalyzes the oxidative cleavage at the 15,15'-double bond of carotenoids and the simultaneous all-trans to 11-cis isomerization of one cleavage product. Carotenoids like 11-cis retinal can promote visual pigment biogenesis in the dark. Essential for the biosynthesis of the 3-hydroxyretinal chromophore of rhodopsin from zeaxanthin and for proper photoreceptor development. This Galleria mellonella (Greater wax moth) protein is Carotenoid isomerooxygenase (ninaB).